A 536-amino-acid chain; its full sequence is Glycine--tRNA ligase (536 aa).

Residues 56–67 (LVSPAGAPSTFE) form an insert region. Residues R106 and E213 each coordinate substrate. ATP-binding positions include 245-247 (RNE), 255-260 (FRSREF), and 333-334 (EL). 260–264 (FEQME) serves as a coordination point for substrate. Residues 350-372 (EGKLDPATNPMTVELNEHGKPKH) are insert. A substrate-binding site is contributed by 396–400 (EPSAG). An ATP-binding site is contributed by 400–403 (GADR).

This sequence belongs to the class-II aminoacyl-tRNA synthetase family. Homodimer.

Its subcellular location is the cytoplasm. The enzyme catalyses tRNA(Gly) + glycine + ATP = glycyl-tRNA(Gly) + AMP + diphosphate. Functionally, catalyzes the attachment of glycine to tRNA(Gly). This Rhodopirellula baltica (strain DSM 10527 / NCIMB 13988 / SH1) protein is Glycine--tRNA ligase.